The following is a 573-amino-acid chain: Thiol:disulfide interchange protein DsbD (573 aa).

An N-terminal signal peptide occupies residues 1–20 (MLKRFFLLLSSLLLVCNVQA). Residues 21-175 (GLFNNKPQYL…AENLSNNYLS (155 aa)) lie on the Periplasmic side of the membrane. Intrachain disulfides connect cysteine 121-cysteine 126 and cysteine 191-cysteine 313. Residues 176 to 196 (IFGFLLLGIGLAFTPCVLPML) traverse the membrane as a helical segment. The Cytoplasmic portion of the chain corresponds to 197–227 (PLLSAIVIGHKNRPNTSRALLLSFTYVQGMA). The chain crosses the membrane as a helical span at residues 228–248 (LTYTLLGLTVAAIGLPFQVAL). Over 249 to 251 (QSP) the chain is Periplasmic. Residues 252–272 (AVLISLAVLFTLLAASMFGLF) traverse the membrane as a helical segment. Over 273–292 (EIRLPNTWQQKLNALSQQQQ) the chain is Cytoplasmic. The helical transmembrane segment at 293–313 (GGAVGNVFIMGIIAGLVASPC) threads the bilayer. The Periplasmic segment spans residues 314-331 (TSAPLSGALLYVAQSGNL). Residues 332–352 (LIGGLALYLLALGMGLPLILI) form a helical membrane-spanning segment. Residues 353-365 (TVFGNQILPKSGE) are Cytoplasmic-facing. Residues 366–386 (WLFKVKTAFGFVMLALPIFLI) form a helical membrane-spanning segment. The Periplasmic segment spans residues 387-393 (SRILPSH). A helical membrane pass occupies residues 394-414 (YEPFLWSTLALAFLGWLISSL). Topologically, residues 415 to 425 (NYSTMLKQAVR) are cytoplasmic. The chain crosses the membrane as a helical span at residues 426 to 446 (ILLFIAFGLTAYPWANLVWQT). The Thioredoxin domain maps to 440 to 573 (ANLVWQTTSN…NQFLAWLNRL (134 aa)). Residues 447–573 (TSNTAQPTTP…NQFLAWLNRL (127 aa)) lie on the Periplasmic side of the membrane. An intrachain disulfide couples cysteine 490 to cysteine 493.

The protein belongs to the thioredoxin family. DsbD subfamily.

The protein resides in the cell inner membrane. The enzyme catalyses [protein]-dithiol + NAD(+) = [protein]-disulfide + NADH + H(+). The catalysed reaction is [protein]-dithiol + NADP(+) = [protein]-disulfide + NADPH + H(+). Its function is as follows. Required to facilitate the formation of correct disulfide bonds in some periplasmic proteins and for the assembly of the periplasmic c-type cytochromes. Acts by transferring electrons from cytoplasmic thioredoxin to the periplasm. This transfer involves a cascade of disulfide bond formation and reduction steps. The protein is Thiol:disulfide interchange protein DsbD of Haemophilus ducreyi (strain 35000HP / ATCC 700724).